Consider the following 190-residue polypeptide: UPF0301 protein DP2218 (190 aa).

It belongs to the UPF0301 (AlgH) family.

This Desulfotalea psychrophila (strain LSv54 / DSM 12343) protein is UPF0301 protein DP2218.